We begin with the raw amino-acid sequence, 816 residues long: Cation/H(+) antiporter 8 (816 aa).

A run of 12 helical transmembrane segments spans residues 64–84 (PKLEIVILLVFFLWQGFNILF), 97–117 (MMLAGLLLNVLVTLSGENSII), 127–147 (IDVAGCLGSFGFLIFWFLKGV), 163–183 (VTGVAAVTFPIVVGFLLFNLK), 197–214 (VMLLMESITSFSGIARLL), 227–247 (VALSSALVSDIVGLLLLIANV), 255–275 (ADGLAILTEITLFLVIAFAVV), 297–317 (IHGVLVLVCLSCMYWEDLSQF), 343–363 (LESFNFGIILPLFLTAVMLRT), 382–402 (FAVASLVLLIFLLKLSVSVIV), 413–433 (SIILALIMSHKGIIELSFYLF), and 447–467 (ILVLSIVLNSLLIPMAIGFLY).

It belongs to the monovalent cation:proton antiporter 2 (CPA2) transporter (TC 2.A.37) family. CHX (TC 2.A.37.4) subfamily. As to expression, specifically expressed in pollen.

The protein resides in the membrane. Functionally, may operate as a cation/H(+) antiporter. This Arabidopsis thaliana (Mouse-ear cress) protein is Cation/H(+) antiporter 8 (CHX8).